A 96-amino-acid chain; its full sequence is Small ribosomal subunit protein bS6 (96 aa).

It belongs to the bacterial ribosomal protein bS6 family.

Its function is as follows. Binds together with bS18 to 16S ribosomal RNA. This chain is Small ribosomal subunit protein bS6, found in Bacillus thuringiensis subsp. konkukian (strain 97-27).